The primary structure comprises 208 residues: Small ribosomal subunit protein uS2 (208 aa).

A disordered region spans residues 189 to 208 (KPDQDLPVPPEEFETRLVQT).

This sequence belongs to the universal ribosomal protein uS2 family.

This is Small ribosomal subunit protein uS2 from Pyrobaculum arsenaticum (strain DSM 13514 / JCM 11321 / PZ6).